Here is a 325-residue protein sequence, read N- to C-terminus: Terpene synthase 11 (325 aa).

A DDxx(x)D/E motif motif is present at residues 97–102 (DDEYLE). Residues 227–235 (NDIYSFVKE) carry the NDxxSxxxD/E motif motif.

Belongs to the terpene synthase family.

The enzyme catalyses (2E,6E)-farnesyl diphosphate = (E)-beta-farnesene + diphosphate. It catalyses the reaction (2E,6E)-farnesyl diphosphate = (3E,6E)-alpha-farnesene + diphosphate. It carries out the reaction geranylgeranyl diphosphate + H2O = (S)-(+)-nephthenol + diphosphate. Its function is as follows. Terpene synthase that converts its substrate farnesyl diphosphate (FPP) into the sesquiterpenes (E)-beta-farnesene and (E,E)-alpha-farnesene. TPS11 also converts geranylgeranyl diphosphate (GGPP) into the diterpene (S)-nephthenol. The protein is Terpene synthase 11 of Dictyostelium purpureum (Slime mold).